The following is a 434-amino-acid chain: Acyl transferase 15 (434 aa).

Catalysis depends on proton acceptor residues His-164 and Asp-371.

This sequence belongs to the plant acyltransferase family.

Involved in the incorporation of ferulate into the cell wall. The polypeptide is Acyl transferase 15 (Oryza sativa subsp. japonica (Rice)).